A 335-amino-acid chain; its full sequence is MSFLPFDQQKPLDFIAVGRLCIDLNANEIHRPMEETMTFTKYVGGSPANIAIGMARLGMKTGFIGRVADDQMGRFIVRYLKNNGIDTSHVITDKSGSVTGLAFTEIKSPTDCSILMYRDNVADLKLEPNDIDEDYIRRAKCLLISGTALAKSPSREAVFLALDYARRHGTVVVFDLDYRPYTWQSKEETAIYYNLAAEKCDVIIGTREEFDMMERFDGQRRDDEQTARKWFDYNAKIVVIKHGKDGSIAYTKTGETFVGTIFPANIVKTFGAGDSYAAGFIYGLMNDWPIPKAMEYGAAAASIVISSHSCSDAMPTLAQIEQFIEQHRNGSAARK.

It belongs to the carbohydrate kinase PfkB family.

The enzyme catalyses 5-dehydro-2-deoxy-D-gluconate + ATP = 6-phospho-5-dehydro-2-deoxy-D-gluconate + ADP + H(+). It participates in polyol metabolism; myo-inositol degradation into acetyl-CoA; acetyl-CoA from myo-inositol: step 5/7. Its function is as follows. Catalyzes the phosphorylation of 5-dehydro-2-deoxy-D-gluconate (2-deoxy-5-keto-D-gluconate or DKG) to 6-phospho-5-dehydro-2-deoxy-D-gluconate (DKGP). The chain is 5-dehydro-2-deoxygluconokinase from Geobacillus kaustophilus (strain HTA426).